A 520-amino-acid polypeptide reads, in one-letter code: T-box transcription factor TBX22 (520 aa).

The segment at 1 to 91 (MALSSRARAF…NSSESLEEKD (91 aa)) is disordered. Residues 33 to 49 (PELREKKGGEEEEERRS) are compositionally biased toward basic and acidic residues. Positions 67 to 84 (STSASSGCGSDSGYGNSS) are enriched in low complexity. A DNA-binding region (T-box) is located at residues 96–283 (LQGSELWKRF…RNPFAKGFRD (188 aa)).

As to expression, seems to be expressed at a low level.

The protein resides in the nucleus. Probable transcriptional regulator involved in developmental processes. This is major determinant crucial to palatogenesis. This Homo sapiens (Human) protein is T-box transcription factor TBX22 (TBX22).